The following is a 242-amino-acid chain: 1-(5-phosphoribosyl)-5-[(5-phosphoribosylamino)methylideneamino] imidazole-4-carboxamide isomerase (242 aa).

The Proton acceptor role is filled by Asp-8. Asp-129 (proton donor) is an active-site residue.

Belongs to the HisA/HisF family.

The protein resides in the cytoplasm. It carries out the reaction 1-(5-phospho-beta-D-ribosyl)-5-[(5-phospho-beta-D-ribosylamino)methylideneamino]imidazole-4-carboxamide = 5-[(5-phospho-1-deoxy-D-ribulos-1-ylimino)methylamino]-1-(5-phospho-beta-D-ribosyl)imidazole-4-carboxamide. Its pathway is amino-acid biosynthesis; L-histidine biosynthesis; L-histidine from 5-phospho-alpha-D-ribose 1-diphosphate: step 4/9. This chain is 1-(5-phosphoribosyl)-5-[(5-phosphoribosylamino)methylideneamino] imidazole-4-carboxamide isomerase, found in Dictyoglomus thermophilum (strain ATCC 35947 / DSM 3960 / H-6-12).